The primary structure comprises 894 residues: MKRRKFSSVVAAVLIFALIFSLFSPGTKAAAAGAIDQAAALENGKEQTGAMKEPEQVKWYKVTPGATDIQKNSHMALTVKSDSVLNVSVYPSKEKALKDETFEMYRSFTAEDGKSEVIFPYAWSGPYYVKVEYLGEEEPEDGGTAEAAAEAKYTIGYKGTKKQPSDLEEEEACPVEMSVDQKKSGKGILDKLRSIRDEQLSQTAEGKELTSLYYKAAPFIVAKLALNKTARNEIYQDLVTLKPLFDDVSENGASSSYKVTEKDQKAINRLYDKALQSVPSFLKEEIKKQADRLNMKQLQGKTAGAILTENNIAAKSEVQTTKVIFKVKDNKSLSSVHNEMKGFSASAQSKKDISNVKKAKKLFDNLYSFELPKDEKQNGAYTASAKRVKSAAATLSKMSNVEFAEPVQEYKSLANDIQYPYQWPLKNNGENGGVKNADVKYEPANTLLSKRKLNDTLIAVVDTGVDSTLADLKGKVRTDLGHNFVGRNNNAMDDQGHGTHVAGIIAAQSDNGYSMTGLNAKAKIIPVKVLDSAGSGDTEQIALGIKYAADKGAKVINLSLGGGYSRVLEFALKYAADKNVLIAAASGNDGENALSYPASSKYVMSVGATNRMDMTADFSNYGKGLDISAPGSDIPSLVPNGNVTYMSGTSMATPYAAAAAGLLFAQNPKLKRTEVEDMLKKTADDISFESVDGGEEELYDDYGDPIEIPKTPGVDWHSGYGRLNVMKAVSAADLQLKVNKLESTQTAVRGSAKEGTLIEVMNGKKKLGSAKAGKDNAFKVNIATQKQDQVLYLKATKGDAKTSYKVVVVKGKPSGTPKVNAVKTKDTAVKGKANSKAMIRVKNKSKKVIASAKADAKGTFSVKIKKQKAGTVLYVTAVDTDKKESKEAKVVVEK.

An N-terminal signal peptide occupies residues 1–31 (MKRRKFSSVVAAVLIFALIFSLFSPGTKAAA). Positions 422-729 (QWPLKNNGEN…YGRLNVMKAV (308 aa)) constitute a Peptidase S8 domain. Active-site charge relay system residues include Asp-462, His-497, and Ser-650.

This sequence belongs to the peptidase S8 family. Proteolytically cleaved to yield CWBP23 and CWBP52.

The protein resides in the secreted. Its subcellular location is the cell wall. Its activity is regulated as follows. Inhibited by PMSF. CWBP52 is a serine-type protease that could be involved in proteoglycan peptide bridges. This chain is Cell wall-associated protease (wprA), found in Bacillus subtilis (strain 168).